A 253-amino-acid polypeptide reads, in one-letter code: Ice-binding protein (253 aa).

A signal peptide spans 1 to 27; that stretch reads MKTLISNSKKVLIPLIMGSIFAGNVMA. A disulfide bridge connects residues Cys75 and Cys93. 2 consecutive short sequence motifs (ice-binding site motif (T-A/G-X-T/N)) follow at residues 220–223 and 232–235; these read TGTT and TAVT.

This sequence belongs to the ice-binding protein family.

Its subcellular location is the secreted. In terms of biological role, binds to the surface of ice crystals and inhibits their growth. Has ice recrystallization inhibition (RI) activity (the ability to prevent the formation of larger grains of ice at the expense of smaller grains), which may protect membranes from freezing injury. Has high thermal hysteresis (TH) activity, which is the ability to lower the freezing point of an aqueous solution below its melting point, and thus the freezing of the cell fluid can be prevented protecting the organism from ice damage. The TH activity of this protein is 3.8 degrees Celsius at 14 mM. In Colwellia sp, this protein is Ice-binding protein.